The primary structure comprises 65 residues: Toxin Co52 (65 aa).

An LCN-type CS-alpha/beta domain is found at glutamate 2 to cysteine 65. 4 disulfides stabilise this stretch: cysteine 12/cysteine 65, cysteine 16/cysteine 41, cysteine 25/cysteine 46, and cysteine 29/cysteine 48.

Expressed by the venom gland.

It localises to the secreted. In terms of biological role, beta toxins bind voltage-independently at site-4 of sodium channels (Nav) and shift the voltage of activation toward more negative potentials thereby affecting sodium channel activation and promoting spontaneous and repetitive firing. Not toxic to mice, chicks, crickets or woodlice (at 5 ug). The chain is Toxin Co52 from Centruroides ornatus (Scorpion).